Consider the following 544-residue polypeptide: Chaperonin GroEL (544 aa).

Residues 29 to 32 (TLGP), 86 to 90 (DGTTT), glycine 413, 476 to 478 (NAA), and aspartate 492 each bind ATP.

This sequence belongs to the chaperonin (HSP60) family. As to quaternary structure, forms a cylinder of 14 subunits composed of two heptameric rings stacked back-to-back. Interacts with the co-chaperonin GroES.

It is found in the cytoplasm. The enzyme catalyses ATP + H2O + a folded polypeptide = ADP + phosphate + an unfolded polypeptide.. Its function is as follows. Together with its co-chaperonin GroES, plays an essential role in assisting protein folding. The GroEL-GroES system forms a nano-cage that allows encapsulation of the non-native substrate proteins and provides a physical environment optimized to promote and accelerate protein folding. The polypeptide is Chaperonin GroEL (Bacillus cereus).